Here is a 336-residue protein sequence, read N- to C-terminus: MAKVYYEKDVTVNVLKEKKVAIIGYGSQGHAHAQNLRDNGFDVVVGLRKGKSWDKANEDGFSVYTVAEAAEKADVVMILLPDELQPEVYEAEIAPNLQAGNSLVFAHGFNVHFDQVKPPANVDVFLVAPKGPGHLVRRTFAEGGAVPALFAVYQDATGVATEKALSYADGIGATRAGVLETTFKEETETDLFGEQAVLCGGVTALVKAGFETLVDAGYQPELAYFECLHELKLIVDLMYEGGLENMRYSVSDTAQWGDFVSGPRVVTEDTKKAMGAVLAEIQDGTFARGWIAEHKAGRPNFHATNEKENKHEIEVVGRKLREMMPFVQPRVKVGVK.

The KARI N-terminal Rossmann domain maps to 2-181 (AKVYYEKDVT…GATRAGVLET (180 aa)). NADP(+) contacts are provided by residues 25–28 (YGSQ), R48, S52, and 82–85 (DELQ). H107 is a catalytic residue. G133 provides a ligand contact to NADP(+). One can recognise a KARI C-terminal knotted domain in the interval 182-327 (TFKEETETDL…RKLREMMPFV (146 aa)). Positions 190, 194, 226, and 230 each coordinate Mg(2+). Residue S251 coordinates substrate.

Belongs to the ketol-acid reductoisomerase family. It depends on Mg(2+) as a cofactor.

The catalysed reaction is (2R)-2,3-dihydroxy-3-methylbutanoate + NADP(+) = (2S)-2-acetolactate + NADPH + H(+). It catalyses the reaction (2R,3R)-2,3-dihydroxy-3-methylpentanoate + NADP(+) = (S)-2-ethyl-2-hydroxy-3-oxobutanoate + NADPH + H(+). It functions in the pathway amino-acid biosynthesis; L-isoleucine biosynthesis; L-isoleucine from 2-oxobutanoate: step 2/4. It participates in amino-acid biosynthesis; L-valine biosynthesis; L-valine from pyruvate: step 2/4. Its function is as follows. Involved in the biosynthesis of branched-chain amino acids (BCAA). Catalyzes an alkyl-migration followed by a ketol-acid reduction of (S)-2-acetolactate (S2AL) to yield (R)-2,3-dihydroxy-isovalerate. In the isomerase reaction, S2AL is rearranged via a Mg-dependent methyl migration to produce 3-hydroxy-3-methyl-2-ketobutyrate (HMKB). In the reductase reaction, this 2-ketoacid undergoes a metal-dependent reduction by NADPH to yield (R)-2,3-dihydroxy-isovalerate. The chain is Ketol-acid reductoisomerase (NADP(+)) 1 from Bacillus cereus (strain ATCC 14579 / DSM 31 / CCUG 7414 / JCM 2152 / NBRC 15305 / NCIMB 9373 / NCTC 2599 / NRRL B-3711).